The sequence spans 320 residues: TATA box-binding protein-like 2 (320 aa).

This sequence belongs to the TBP family. In terms of tissue distribution, expression is restricted to the gonads, and is higher in the ovary than the testis.

The protein resides in the nucleus. In terms of biological role, TATA box-binding transcription factor. Members of the TBP family are differentially required to regulate transcription and development during early embryogenesis. Required for gastrulation. Regulates a large subset of genes that are ventrally expressed. Binds to a subset of promoters. In Xenopus laevis (African clawed frog), this protein is TATA box-binding protein-like 2.